The sequence spans 237 residues: NADH-ubiquinone oxidoreductase assembly factor N7BML (237 aa).

Residues 214-223 (VEKERDDSGK) show a composition bias toward basic and acidic residues. Residues 214–237 (VEKERDDSGKPAEWTPKAAVRRRG) are disordered.

It belongs to the complex I NDUFA12 subunit family.

The protein resides in the mitochondrion. Its function is as follows. Acts as an assembly factor of mitochondrial complex I. The polypeptide is NADH-ubiquinone oxidoreductase assembly factor N7BML (Yarrowia lipolytica (strain CLIB 122 / E 150) (Yeast)).